We begin with the raw amino-acid sequence, 572 residues long: FAD-linked oxidoreductase patO (572 aa).

Positions 1–23 (MRLSIYSSILLLRAMCLVRPTFG) are cleaved as a signal peptide. Asparagine 48, asparagine 71, asparagine 126, asparagine 180, asparagine 309, asparagine 354, asparagine 381, asparagine 422, asparagine 446, and asparagine 481 each carry an N-linked (GlcNAc...) asparagine glycan. Positions 115–295 (CAPGDMVVYS…YSMTVKAFPD (181 aa)) constitute an FAD-binding PCMH-type domain.

It belongs to the oxygen-dependent FAD-linked oxidoreductase family. FAD is required as a cofactor.

The protein resides in the vacuole lumen. Its pathway is mycotoxin biosynthesis; patulin biosynthesis. Its function is as follows. FAD-linked oxidoreductase; part of the gene cluster that mediates the biosynthesis of patulin, an acetate-derived tetraketide mycotoxin produced by several fungal species that shows antimicrobial properties against several bacteria. PatO acts with patJ in the vacuole to convert gentisyl alcohol to isoepoxydon. The pathway begins with the synthesis of 6-methylsalicylic acid by the polyketide synthase (PKS) patK via condensation of acetate and malonate units. The 6-methylsalicylic acid decarboxylase patG then catalyzes the decarboxylation of 6-methylsalicylic acid to yield m-cresol (also known as 3-methylphenol). These first reactions occur in the cytosol. The intermediate m-cresol is then transported into the endoplasmic reticulum where the cytochrome P450 monooxygenase patH converts it to m-hydroxybenzyl alcohol, which is further converted to gentisyl alcohol by the cytochrome P450 monooxygenase patI. The oxidoreductases patJ and patO further convert gentisyl alcohol to isoepoxydon in the vacuole. PatN catalyzes then the transformation of isoepoxydon into phyllostine. The cluster protein patF is responsible for the conversion from phyllostine to neopatulin whereas the alcohol dehydrogenase patD converts neopatulin to E-ascladiol. The steps between isoepoxydon and E-ascladiol occur in the cytosol, and E-ascladiol is probably secreted to the extracellular space by one of the cluster-specific transporters patC or patM. Finally, the secreted patulin synthase patE catalyzes the conversion of E-ascladiol to patulin. The sequence is that of FAD-linked oxidoreductase patO from Aspergillus clavatus (strain ATCC 1007 / CBS 513.65 / DSM 816 / NCTC 3887 / NRRL 1 / QM 1276 / 107).